Reading from the N-terminus, the 808-residue chain is Transducin beta-like protein 3 (808 aa).

Ala2 carries the N-acetylalanine modification. 13 WD repeats span residues 64-105, 107-146, 149-190, 193-232, 245-284, 290-329, 332-372, 374-413, 419-459, 477-516, 519-560, 562-602, and 604-642; these read EDQE…RLWK, IHTA…GTHH, GSPG…CLAV, AHYS…ATRT, LPEE…CVYT, GPGQ…LQKQ, GYSE…CQIL, GHTD…QVMC, GHTH…LSKN, CHDK…LLGV, GHRR…KTFE, HDAS…RTLD, and HEDK…EQAE. At Ser257 the chain carries Phosphoserine. Lys407 is covalently cross-linked (Glycyl lysine isopeptide (Lys-Gly) (interchain with G-Cter in SUMO2)).

In terms of assembly, part of the small subunit (SSU) processome, composed of more than 70 proteins and the RNA chaperone small nucleolar RNA (snoRNA) U3.

The protein resides in the nucleus. The protein localises to the nucleolus. Part of the small subunit (SSU) processome, first precursor of the small eukaryotic ribosomal subunit. During the assembly of the SSU processome in the nucleolus, many ribosome biogenesis factors, an RNA chaperone and ribosomal proteins associate with the nascent pre-rRNA and work in concert to generate RNA folding, modifications, rearrangements and cleavage as well as targeted degradation of pre-ribosomal RNA by the RNA exosome. This is Transducin beta-like protein 3 from Homo sapiens (Human).